We begin with the raw amino-acid sequence, 230 residues long: Phosphatidylserine decarboxylase proenzyme (230 aa).

S186 serves as the catalytic Schiff-base intermediate with substrate; via pyruvic acid. S186 is modified (pyruvic acid (Ser); by autocatalysis).

Belongs to the phosphatidylserine decarboxylase family. PSD-A subfamily. As to quaternary structure, heterodimer of a large membrane-associated beta subunit and a small pyruvoyl-containing alpha subunit. It depends on pyruvate as a cofactor. Post-translationally, is synthesized initially as an inactive proenzyme. Formation of the active enzyme involves a self-maturation process in which the active site pyruvoyl group is generated from an internal serine residue via an autocatalytic post-translational modification. Two non-identical subunits are generated from the proenzyme in this reaction, and the pyruvate is formed at the N-terminus of the alpha chain, which is derived from the carboxyl end of the proenzyme. The post-translation cleavage follows an unusual pathway, termed non-hydrolytic serinolysis, in which the side chain hydroxyl group of the serine supplies its oxygen atom to form the C-terminus of the beta chain, while the remainder of the serine residue undergoes an oxidative deamination to produce ammonia and the pyruvoyl prosthetic group on the alpha chain.

Its subcellular location is the cell membrane. The catalysed reaction is a 1,2-diacyl-sn-glycero-3-phospho-L-serine + H(+) = a 1,2-diacyl-sn-glycero-3-phosphoethanolamine + CO2. Its pathway is phospholipid metabolism; phosphatidylethanolamine biosynthesis; phosphatidylethanolamine from CDP-diacylglycerol: step 2/2. Functionally, catalyzes the formation of phosphatidylethanolamine (PtdEtn) from phosphatidylserine (PtdSer). In Wolbachia pipientis wMel, this protein is Phosphatidylserine decarboxylase proenzyme.